A 103-amino-acid polypeptide reads, in one-letter code: Small ribosomal subunit protein eS25 (103 aa).

The interval 1–23 (MGGEDMAKKKAPSAKEGEKQQGF) is disordered.

It belongs to the eukaryotic ribosomal protein eS25 family.

In Aeropyrum pernix (strain ATCC 700893 / DSM 11879 / JCM 9820 / NBRC 100138 / K1), this protein is Small ribosomal subunit protein eS25 (rps25e).